A 433-amino-acid chain; its full sequence is Enolase (433 aa).

Glutamine 167 contacts (2R)-2-phosphoglycerate. The Proton donor role is filled by glutamate 209. Mg(2+)-binding residues include aspartate 246, glutamate 291, and aspartate 318. Lysine 326 is subject to N6-acetyllysine. Positions 343, 372, 373, and 394 each coordinate (2R)-2-phosphoglycerate. Lysine 343 functions as the Proton acceptor in the catalytic mechanism. At lysine 343 the chain carries N6-(2-hydroxyisobutyryl)lysine.

Belongs to the enolase family. In terms of assembly, component of the RNA degradosome, a multiprotein complex involved in RNA processing and mRNA degradation. Mg(2+) serves as cofactor. In terms of processing, acetylated and 2-hydroxyisobutyrylated at Lys-326 and Lys-343, respectively, reducing the enolase activity. Deacetylated and de-2-hydroxyisobutyrylated by NpdA/CobB, increasing the enolase activity.

Its subcellular location is the cytoplasm. The protein resides in the secreted. The protein localises to the cell surface. It carries out the reaction (2R)-2-phosphoglycerate = phosphoenolpyruvate + H2O. It functions in the pathway carbohydrate degradation; glycolysis; pyruvate from D-glyceraldehyde 3-phosphate: step 4/5. Functionally, catalyzes the reversible conversion of 2-phosphoglycerate (2-PG) into phosphoenolpyruvate (PEP). It is essential for the degradation of carbohydrates via glycolysis. In Proteus mirabilis (strain HI4320), this protein is Enolase.